A 374-amino-acid polypeptide reads, in one-letter code: Ribosomal RNA large subunit methyltransferase G (374 aa).

The protein belongs to the methyltransferase superfamily. RlmG family.

The protein localises to the cytoplasm. It catalyses the reaction guanosine(1835) in 23S rRNA + S-adenosyl-L-methionine = N(2)-methylguanosine(1835) in 23S rRNA + S-adenosyl-L-homocysteine + H(+). Specifically methylates the guanine in position 1835 (m2G1835) of 23S rRNA. This chain is Ribosomal RNA large subunit methyltransferase G, found in Pseudomonas entomophila (strain L48).